We begin with the raw amino-acid sequence, 340 residues long: Beta-hexosaminidase (340 aa).

Substrate-binding positions include Asp60, Arg68, Arg127, and 157-158 (KH). His170 acts as the Proton donor/acceptor in catalysis. Asp242 (nucleophile) is an active-site residue.

The protein belongs to the glycosyl hydrolase 3 family. NagZ subfamily.

The protein resides in the cytoplasm. The enzyme catalyses Hydrolysis of terminal non-reducing N-acetyl-D-hexosamine residues in N-acetyl-beta-D-hexosaminides.. Its pathway is cell wall biogenesis; peptidoglycan recycling. Its function is as follows. Plays a role in peptidoglycan recycling by cleaving the terminal beta-1,4-linked N-acetylglucosamine (GlcNAc) from peptide-linked peptidoglycan fragments, giving rise to free GlcNAc, anhydro-N-acetylmuramic acid and anhydro-N-acetylmuramic acid-linked peptides. The sequence is that of Beta-hexosaminidase from Glaesserella parasuis serovar 5 (strain SH0165) (Haemophilus parasuis).